The sequence spans 313 residues: GTP cyclohydrolase MptA (313 aa).

Belongs to the GTP cyclohydrolase IV family. In terms of assembly, homodimer. Fe(2+) serves as cofactor.

The catalysed reaction is GTP + H2O = 7,8-dihydroneopterin 2',3'-cyclic phosphate + formate + diphosphate + H(+). It participates in cofactor biosynthesis; 5,6,7,8-tetrahydromethanopterin biosynthesis. Functionally, converts GTP to 7,8-dihydro-D-neopterin 2',3'-cyclic phosphate, the first intermediate in the biosynthesis of coenzyme methanopterin. This Methanosphaera stadtmanae (strain ATCC 43021 / DSM 3091 / JCM 11832 / MCB-3) protein is GTP cyclohydrolase MptA.